Consider the following 594-residue polypeptide: SHC-transforming protein 3 (594 aa).

Positions 98–147 are disordered; the sequence is GSCSAPSLAAPDGSAPSAPRAPAMSAARKGRPGDEPLPRPPRGAPHASDQ. The span at 101–124 shows a compositional bias: low complexity; it reads SAPSLAAPDGSAPSAPRAPAMSAA. The 186-residue stretch at 149–334 folds into the PID domain; sequence LGPGVTYVVK…LDEPWTEEEG (186 aa). The CH1 stretch occupies residues 335 to 498; it reads DGSDHPYYNS…KMLEELQAET (164 aa). Disordered regions lie at residues 351 to 373 and 386 to 405; these read PPGG…AQFA and GDTF…SSDI. The span at 393 to 405 shows a compositional bias: polar residues; the sequence is WQQTPLRQGSSDI. The residue at position 402 (S402) is a Phosphoserine. The SH2 domain maps to 499–590; that stretch reads WYQGEMSRKE…GSELCLQQPV (92 aa).

In terms of assembly, interacts with the Trk receptors in a phosphotyrosine-dependent manner. Once activated, binds to GRB2. Interacts with activated EGF receptors. Post-translationally, tyrosine phosphorylated. In terms of tissue distribution, mainly expressed in brain. Hardly detectable in other tissues, except in pancreas. Highly expressed in the cerebral cortex, frontal and temporal lobes, occipital pole, hippocampus, caudate nucleus and amygdala. Expressed at low level in the cerebellum, medulla and spinal cord.

Functionally, signaling adapter that couples activated growth factor receptors to signaling pathway in neurons. Involved in the signal transduction pathways of neurotrophin-activated Trk receptors in cortical neurons. The chain is SHC-transforming protein 3 (SHC3) from Homo sapiens (Human).